The sequence spans 311 residues: Heme A synthase (311 aa).

Topologically, residues methionine 1 to lysine 6 are cytoplasmic. A helical membrane pass occupies residues tryptophan 7–threonine 27. At lysine 28–arginine 62 the chain is on the extracellular side. Cysteines 35 and 42 form a disulfide. Residue glutamate 58 is part of the active site. Position 61 (histidine 61) interacts with heme o. The chain crosses the membrane as a helical span at residues leucine 63 to tyrosine 83. The Cytoplasmic segment spans residues lysine 84–threonine 91. The chain crosses the membrane as a helical span at residues leucine 92 to valine 112. At tryptophan 113–alanine 121 the chain is on the extracellular side. A helical transmembrane segment spans residues isoleucine 122–phenylalanine 142. Histidine 123 lines the heme o pocket. Over glutamate 143–methionine 159 the chain is Cytoplasmic. The helical transmembrane segment at lysine 160–valine 180 threads the bilayer. Residues arginine 181–methionine 211 are Extracellular-facing. A disulfide bond links cysteine 189 and cysteine 195. A helical transmembrane segment spans residues glycine 212 to isoleucine 232. Histidine 213 is a heme b binding site. Topologically, residues arginine 233–tryptophan 243 are cytoplasmic. A helical membrane pass occupies residues glycine 244–phenylalanine 264. The Extracellular segment spans residues threonine 265–methionine 271. Residues alanine 272–leucine 292 form a helical membrane-spanning segment. Histidine 275 is a binding site for heme b. The Cytoplasmic segment spans residues glycine 293–lysine 311.

The protein belongs to the COX15/CtaA family. Type 1 subfamily. Interacts with CtaB. Heme b serves as cofactor.

The protein resides in the cell membrane. It carries out the reaction Fe(II)-heme o + 2 A + H2O = Fe(II)-heme a + 2 AH2. It functions in the pathway porphyrin-containing compound metabolism; heme A biosynthesis; heme A from heme O: step 1/1. Functionally, catalyzes the conversion of heme O to heme A by two successive hydroxylations of the methyl group at C8. The first hydroxylation forms heme I, the second hydroxylation results in an unstable dihydroxymethyl group, which spontaneously dehydrates, resulting in the formyl group of heme A. In Bacillus cereus (strain G9842), this protein is Heme A synthase.